Here is a 145-residue protein sequence, read N- to C-terminus: AP-2 complex subunit sigma (145 aa).

This sequence belongs to the adaptor complexes small subunit family. As to quaternary structure, adaptor protein complex 2 (AP-2) is a heterotetramer composed of two large adaptins (alpha-type subunit apl3 and beta-type subunit apl1), a medium chain (mu-type subunit apm4) and a small adaptin (sigma-type subunit aps2).

Its subcellular location is the cell membrane. It localises to the membrane. It is found in the coated pit. Its function is as follows. Component of the adaptor complexes which link clathrin to receptors in coated vesicles. Clathrin-associated protein complexes are believed to interact with the cytoplasmic tails of membrane proteins, leading to their selection and concentration. The sequence is that of AP-2 complex subunit sigma (aps2) from Emericella nidulans (strain FGSC A4 / ATCC 38163 / CBS 112.46 / NRRL 194 / M139) (Aspergillus nidulans).